Here is a 556-residue protein sequence, read N- to C-terminus: Outer spore wall assembly protein SHE10 (556 aa).

Residues 1–21 (MRFLTKFLLFLATVYFGLKYA) form the signal peptide. The stretch at 135-201 (NKNLKRHVER…KQITSDVKKT (67 aa)) forms a coiled coil. A compositionally biased stretch (basic and acidic residues) spans 190–208 (EAKQITSDVKKTVESEIKK). Disordered regions lie at residues 190 to 263 (EAKQ…EDIT) and 534 to 556 (RKEAGEVNESSEEEQIVEEPISA). The span at 220–244 (IVSTSTIVKTITRTRHSSSSTTSTK) shows a compositional bias: low complexity. Residues 245–256 (SAEETSEKNLET) show a composition bias toward basic and acidic residues. The stretch at 481–547 (KISEFKLLLD…GEVNESSEEE (67 aa)) forms a coiled coil.

This sequence belongs to the SHE10 family. As to quaternary structure, component of the mitochondria-localized RNase mitochondrial RNA-processing (RNase MRP) composed of one single RNA encoded by the NME1 gene and at least 31 proteins. Absent in the nucleus-localized RNase MRP (NuMRP).

The protein resides in the mitochondrion. Involved in spore wall assembly. May be a component of the mitochondrial RNase MRP (MtMRP), a ribonucleoprotein endoribonuclease involved in the cleaving RNA transcripts to generate primers for DNA replication in mitochondria. In Candida glabrata (strain ATCC 2001 / BCRC 20586 / JCM 3761 / NBRC 0622 / NRRL Y-65 / CBS 138) (Yeast), this protein is Outer spore wall assembly protein SHE10.